Here is a 189-residue protein sequence, read N- to C-terminus: Peptidyl-tRNA hydrolase (189 aa).

Residue tyrosine 15 participates in tRNA binding. The active-site Proton acceptor is the histidine 20. Phenylalanine 66, asparagine 68, and asparagine 114 together coordinate tRNA.

It belongs to the PTH family. As to quaternary structure, monomer.

It is found in the cytoplasm. The catalysed reaction is an N-acyl-L-alpha-aminoacyl-tRNA + H2O = an N-acyl-L-amino acid + a tRNA + H(+). Its function is as follows. Hydrolyzes ribosome-free peptidyl-tRNAs (with 1 or more amino acids incorporated), which drop off the ribosome during protein synthesis, or as a result of ribosome stalling. Functionally, catalyzes the release of premature peptidyl moieties from peptidyl-tRNA molecules trapped in stalled 50S ribosomal subunits, and thus maintains levels of free tRNAs and 50S ribosomes. This chain is Peptidyl-tRNA hydrolase, found in Streptococcus pneumoniae (strain Taiwan19F-14).